A 260-amino-acid polypeptide reads, in one-letter code: Methylesterase 7 (260 aa).

S84 serves as the catalytic Acyl-ester intermediate. Catalysis depends on charge relay system residues D210 and H238.

The protein belongs to the AB hydrolase superfamily. Methylesterase family.

It catalyses the reaction methyl (indol-3-yl)acetate + H2O = (indol-3-yl)acetate + methanol + H(+). The enzyme catalyses methyl salicylate + H2O = salicylate + methanol + H(+). Its pathway is plant hormone biosynthesis. Its activity is regulated as follows. Esterase activity is down-regulated by salicylic acid (SA). Methylesterase shown to have carboxylesterase activity, methyl indole-3-acetic acid (MeIAA) esterase activity and methyl salicylate (MeSA) esterase activity in vitro. Required to convert methyl salicylate (MeSA) to salicylic acid (SA) as part of the signal transduction pathways that activate systemic acquired resistance in systemic tissue. MeSA is believed to be an inactive form that needs to be demethylated to exert a biological effect. In Arabidopsis thaliana (Mouse-ear cress), this protein is Methylesterase 7.